The primary structure comprises 979 residues: Protein SMAX1-LIKE 6 (979 aa).

One can recognise a Clp R domain in the interval 8–190 (ARECLTEEAA…PVTQLSSRFS (183 aa)). Repeat stretches follow at residues 12-86 (LTEE…LDRL) and 100-190 (VSNS…SRFS). An EAR motif is present at residues 833-837 (LDLNL).

This sequence belongs to the ClpA/ClpB family. As to quaternary structure, interacts with TPL/TPR in an EAR-motif dependent manner. Interacts with TPR3. Interacts with MAX2 and TPR2. Interacts with D14. The interaction with D14 occurs in the presence of (2'R) stereoisomers of strigolactones, but not (2'S) stereoisomers. Ubiquitinated upon strigolactone treatment. Probable proteolytic target of SCF(MAX2)-mediated stigolactone signaling. In terms of tissue distribution, detected in roots, seedlings and axillary branches. Expressed in the primary rosette buds and expanding leaves of adult rosettes, the vasculature of the hypocotyls, cotyledons, and mature roots, and in the midvein and petioles of young leaves.

The protein resides in the nucleus. Probable component of a transcriptional corepressor complex involved in branching control. Regulates cotyledon expansion and lateral root growth, but not germination or hypocotyl elongation. Promotes auxin transport and PIN1 accumulation in the stem and represses BRC1/TCP18 expression in axillary buds. This chain is Protein SMAX1-LIKE 6, found in Arabidopsis thaliana (Mouse-ear cress).